The following is a 333-amino-acid chain: Casein kinase II subunit beta-1 (333 aa).

Positions 58–78 are enriched in acidic residues; it reads VEPEDDDDEEEEDEEDEEDMS. 2 disordered regions span residues 58 to 92 and 282 to 333; these read VEPEDDDDEEEEDEEDEEDMSGGDGINKPHGERRH and ARRY…ESEL. Residues 305–316 are compositionally biased toward basic residues; it reads ASRRRGPPRRQK.

It belongs to the casein kinase 2 subunit beta family. In terms of assembly, tetramer composed of two alpha chains, one beta chain and one beta' chain. In terms of processing, phosphorylated by alpha subunit.

Regulatory subunit of casein kinase II/CK2. As part of the kinase complex regulates the basal catalytic activity of the alpha subunit a constitutively active serine/threonine-protein kinase that phosphorylates a large number of substrates containing acidic residues C-terminal to the phosphorylated serine or threonine. This chain is Casein kinase II subunit beta-1 (ckb-1), found in Neurospora crassa (strain ATCC 24698 / 74-OR23-1A / CBS 708.71 / DSM 1257 / FGSC 987).